A 342-amino-acid chain; its full sequence is Large ribosomal subunit protein uL3 (342 aa).

Residues 1–22 (MGHRKLSSPRRGSAGLRPRKRA) form a disordered region.

Belongs to the universal ribosomal protein uL3 family. Part of the 50S ribosomal subunit. Forms a cluster with proteins L14 and L24e.

In terms of biological role, one of the primary rRNA binding proteins, it binds directly near the 3'-end of the 23S rRNA, where it nucleates assembly of the 50S subunit. This chain is Large ribosomal subunit protein uL3, found in Sulfolobus acidocaldarius (strain ATCC 33909 / DSM 639 / JCM 8929 / NBRC 15157 / NCIMB 11770).